An 805-amino-acid polypeptide reads, in one-letter code: Muscarinic acetylcholine receptor DM1 (805 aa).

Residues 1–100 lie on the Extracellular side of the membrane; it reads MEPVMSLALA…GFETKGPRYS (100 aa). Residues 27–43 show a composition bias toward low complexity; it reads TSTTTTTTTTTSTTTTT. The segment at 27–47 is disordered; sequence TSTTTTTTTTTSTTTTTASPA. Asn65, Asn84, and Asn87 each carry an N-linked (GlcNAc...) asparagine glycan. Residues 101 to 121 traverse the membrane as a helical segment; the sequence is LASMVVMGFVAAILSTVTVAG. The Cytoplasmic segment spans residues 122-141; sequence NVMVMISFKIDKQLQTISNY. The chain crosses the membrane as a helical span at residues 142-162; that stretch reads FLFSLAIADFAIGAISMPLFA. The Extracellular segment spans residues 163-177; sequence VTTILGYWPLGPIVC. Residues 178–198 form a helical membrane-spanning segment; it reads DTWLALDYLASNASVLNLLII. The Cytoplasmic segment spans residues 199-220; the sequence is SFDRYFSVTRPLTYRAKRTTNR. The helical transmembrane segment at 221–241 threads the bilayer; the sequence is AAVMIGAAWGISLLLWPPWIY. Residues 242–266 lie on the Extracellular side of the membrane; that stretch reads SWPYIEGKRTVPKDECYIQFIETNQ. Residues 267-287 form a helical membrane-spanning segment; that stretch reads YITFGTALAAFYFPVTIMCFL. Residues 288–718 are Cytoplasmic-facing; it reads YWRIWRETKK…KRQESKAAKT (431 aa). 3 disordered regions span residues 302 to 322, 340 to 359, and 507 to 530; these read LPNL…SDEN, GNDH…DAES, and GNGN…VNGN. Composition is skewed to basic and acidic residues over residues 308–318 and 341–353; these read GKKDSSKRSNS and NDHD…RSES. Residues 507–525 are compositionally biased toward low complexity; sequence GNGNGAINNNNNASHNGNG. Residues 719–739 form a helical membrane-spanning segment; the sequence is LSAILLSFIITWTPYNILVLI. Topologically, residues 740–752 are extracellular; the sequence is KPLTTCSDCIPTE. The chain crosses the membrane as a helical span at residues 753–773; it reads LWDFFYALCYINSTINPMCYA. Residues 774-805 are Cytoplasmic-facing; the sequence is LCNATFRRTYVRILTCKWHTRNREGMVRGVYN.

Belongs to the G-protein coupled receptor 1 family. Muscarinic acetylcholine receptor subfamily. As to expression, intense staining in the glomeruli of the antennal lobes, the region of the nervous system containing terminals of antennal olfactory sensory neurons and mechanosensory neurons. Also a discrete group of neurosecretory cells in the pars intercerebralis of the brain.

Its subcellular location is the cell membrane. The protein localises to the postsynaptic cell membrane. In terms of biological role, the muscarinic acetylcholine receptor mediates various cellular responses, including inhibition of adenylate cyclase, breakdown of phosphoinositides and modulation of potassium channels through the action of G proteins. Primary transducing effect is Pi turnover. May have a role in the processing of olfactory and mechanosensory signals; regulation of neurosecretion. The sequence is that of Muscarinic acetylcholine receptor DM1 (mAChR-A) from Drosophila melanogaster (Fruit fly).